The following is a 138-amino-acid chain: Large ribosomal subunit protein bL17 (138 aa).

Belongs to the bacterial ribosomal protein bL17 family. In terms of assembly, part of the 50S ribosomal subunit. Contacts protein L32.

This is Large ribosomal subunit protein bL17 from Halorhodospira halophila (strain DSM 244 / SL1) (Ectothiorhodospira halophila (strain DSM 244 / SL1)).